We begin with the raw amino-acid sequence, 102 residues long: Flagellar hook-basal body complex protein FliE 1 (102 aa).

This sequence belongs to the FliE family.

Its subcellular location is the bacterial flagellum basal body. The protein is Flagellar hook-basal body complex protein FliE 1 (fliE1) of Bradyrhizobium diazoefficiens (strain JCM 10833 / BCRC 13528 / IAM 13628 / NBRC 14792 / USDA 110).